The following is a 142-amino-acid chain: Type IV pilus subunit protein TapA (142 aa).

Residues 1-6 constitute a propeptide, leader sequence; that stretch reads MKKQSG. An N-methylphenylalanine modification is found at Phe7. The chain crosses the membrane as a helical span at residues 7–27; it reads FTLIELMIVVAIVAILAAIAL.

Belongs to the N-Me-Phe pilin family.

The protein resides in the membrane. Major component of the type IV (TAP) pilus. Aeromonas hydrophila possesses two distinct families of type IV pili: the bundle-forming pilus (Bfp) and the type IV pilus (Tap). The chain is Type IV pilus subunit protein TapA (tapA) from Aeromonas hydrophila.